The primary structure comprises 142 residues: Transcriptional regulator MraZ (142 aa).

SpoVT-AbrB domains are found at residues 5 to 51 and 77 to 120; these read ASAL…PRPE and AMDV…DAQT.

Belongs to the MraZ family. As to quaternary structure, forms oligomers.

The protein resides in the cytoplasm. It is found in the nucleoid. The sequence is that of Transcriptional regulator MraZ from Paraburkholderia xenovorans (strain LB400).